Reading from the N-terminus, the 447-residue chain is NADP-specific glutamate dehydrogenase (447 aa).

Substrate-binding residues include Lys92, Gln113, and Lys116. Lys128 acts as the Proton donor in catalysis. Gly167 contributes to the substrate binding site. NADP(+) contacts are provided by Thr212 and Asn243. Ser379 is a binding site for substrate.

This sequence belongs to the Glu/Leu/Phe/Val dehydrogenases family. Homohexamer.

The enzyme catalyses L-glutamate + NADP(+) + H2O = 2-oxoglutarate + NH4(+) + NADPH + H(+). Catalyzes the reversible oxidative deamination of glutamate to alpha-ketoglutarate and ammonia. This Corynebacterium efficiens (strain DSM 44549 / YS-314 / AJ 12310 / JCM 11189 / NBRC 100395) protein is NADP-specific glutamate dehydrogenase (gdh).